Reading from the N-terminus, the 122-residue chain is Large ribosomal subunit protein bL12 (122 aa).

Belongs to the bacterial ribosomal protein bL12 family. Homodimer. Part of the ribosomal stalk of the 50S ribosomal subunit. Forms a multimeric L10(L12)X complex, where L10 forms an elongated spine to which 2 to 4 L12 dimers bind in a sequential fashion. Binds GTP-bound translation factors.

Its function is as follows. Forms part of the ribosomal stalk which helps the ribosome interact with GTP-bound translation factors. Is thus essential for accurate translation. The polypeptide is Large ribosomal subunit protein bL12 (Pasteurella multocida (strain Pm70)).